The primary structure comprises 493 residues: Galactose-1-phosphate uridylyltransferase (493 aa).

This sequence belongs to the galactose-1-phosphate uridylyltransferase type 2 family.

The protein resides in the cytoplasm. It catalyses the reaction alpha-D-galactose 1-phosphate + UDP-alpha-D-glucose = alpha-D-glucose 1-phosphate + UDP-alpha-D-galactose. The protein operates within carbohydrate metabolism; galactose metabolism. The protein is Galactose-1-phosphate uridylyltransferase of Lactococcus lactis subsp. cremoris (strain MG1363).